Here is a 209-residue protein sequence, read N- to C-terminus: Uracil phosphoribosyltransferase (209 aa).

Residues Arg-79, Arg-104, and 131 to 139 (DPMLATGAS) each bind 5-phospho-alpha-D-ribose 1-diphosphate. Residues Ile-194 and 199-201 (GDA) each bind uracil. A 5-phospho-alpha-D-ribose 1-diphosphate-binding site is contributed by Asp-200.

It belongs to the UPRTase family. Mg(2+) serves as cofactor.

The catalysed reaction is UMP + diphosphate = 5-phospho-alpha-D-ribose 1-diphosphate + uracil. It participates in pyrimidine metabolism; UMP biosynthesis via salvage pathway; UMP from uracil: step 1/1. Allosterically activated by GTP. Its function is as follows. Catalyzes the conversion of uracil and 5-phospho-alpha-D-ribose 1-diphosphate (PRPP) to UMP and diphosphate. This Staphylococcus saprophyticus subsp. saprophyticus (strain ATCC 15305 / DSM 20229 / NCIMB 8711 / NCTC 7292 / S-41) protein is Uracil phosphoribosyltransferase.